Consider the following 346-residue polypeptide: Extracellular protease (346 aa).

The signal sequence occupies residues 1 to 21; it reads MMKATPIALLLAGVLASPLCA. Zn(2+) is bound at residue His296. Glu297 is an active-site residue. 2 residues coordinate Zn(2+): His300 and Asp309.

It belongs to the peptidase M35 family. Zn(2+) serves as cofactor.

Functionally, heat-labile protease. The polypeptide is Extracellular protease (Aeromonas hydrophila).